The sequence spans 94 residues: Neutrophil defensin 1 (94 aa).

The first 19 residues, 1 to 19 (MRTLAILAAILLVALQAQA), serve as a signal peptide directing secretion. Residues 20-64 (EPLQARADEVAAAPEQIPADNPEVVVSLAWDESLAPKHPGSRKNV) constitute a propeptide that is removed on maturation. 3 disulfide bridges follow: Cys-66–Cys-94, Cys-68–Cys-83, and Cys-73–Cys-93. Residue Arg-78 is modified to ADP-ribosylarginine; by ART1. Residue Tyr-85 is modified to Phosphotyrosine. At Arg-88 the chain carries ADP-ribosylarginine; by ART1.

It belongs to the alpha-defensin family. As to quaternary structure, tetramer. Dimer. Interacts with RETN. Post-translationally, ADP-ribosylation drastically reduces cytotoxic and antibacterial activities, and enhances IL8 production.

It localises to the secreted. Functionally, effector molecule of the innate immune system that acts via antibiotic-like properties against a broad array of infectious agents including bacteria, fungi, and viruses or by promoting the activation and maturation of some APCs. Interacts with the essential precursor of cell wall synthesis lipid II to inhibit bacterial cell wall synthesis. Inhibits adenovirus infection via inhibition of viral disassembly at the vertex region, thereby restricting the release of internal capsid protein pVI, which is required for endosomal membrane penetration during cell entry. In addition, interaction with adenovirus capsid leads to the redirection of viral particles to TLR4 thereby promoting a NLRP3-mediated inflammasome response and interleukin 1-beta (IL-1beta) release. Induces the production of proinflammatory cytokines including type I interferon (IFN) in plasmacytoid dendritic cells (pDCs) by triggering the degradation of NFKBIA and nuclear translocation of IRF1, both of which are required for activation of pDCs. This chain is Neutrophil defensin 1 (DEFA1), found in Pan troglodytes (Chimpanzee).